A 143-amino-acid polypeptide reads, in one-letter code: Ribonuclease P protein component (143 aa).

A disordered region spans residues 111–143; sequence RVKRKGGGPGGNRRSAPPGSAPLTDDGRLRGEP.

This sequence belongs to the RnpA family. Consists of a catalytic RNA component (M1 or rnpB) and a protein subunit.

It carries out the reaction Endonucleolytic cleavage of RNA, removing 5'-extranucleotides from tRNA precursor.. Its function is as follows. RNaseP catalyzes the removal of the 5'-leader sequence from pre-tRNA to produce the mature 5'-terminus. It can also cleave other RNA substrates such as 4.5S RNA. The protein component plays an auxiliary but essential role in vivo by binding to the 5'-leader sequence and broadening the substrate specificity of the ribozyme. This chain is Ribonuclease P protein component, found in Deinococcus geothermalis (strain DSM 11300 / CIP 105573 / AG-3a).